The sequence spans 363 residues: 3-dehydroquinate synthase (363 aa).

Residues 75-80 (DAEEGK), 109-113 (GAVTD), 133-134 (TS), K146, K155, and 173-176 (TLQT) each bind NAD(+). Residues E188, H251, and H267 each contribute to the Zn(2+) site.

Belongs to the sugar phosphate cyclases superfamily. Dehydroquinate synthase family. Co(2+) serves as cofactor. Zn(2+) is required as a cofactor. It depends on NAD(+) as a cofactor.

The protein localises to the cytoplasm. The catalysed reaction is 7-phospho-2-dehydro-3-deoxy-D-arabino-heptonate = 3-dehydroquinate + phosphate. It participates in metabolic intermediate biosynthesis; chorismate biosynthesis; chorismate from D-erythrose 4-phosphate and phosphoenolpyruvate: step 2/7. Functionally, catalyzes the conversion of 3-deoxy-D-arabino-heptulosonate 7-phosphate (DAHP) to dehydroquinate (DHQ). The sequence is that of 3-dehydroquinate synthase from Paenarthrobacter aurescens (strain TC1).